Here is a 122-residue protein sequence, read N- to C-terminus: UPF0145 protein BamMC406_5002 (122 aa).

This sequence belongs to the UPF0145 family.

The polypeptide is UPF0145 protein BamMC406_5002 (Burkholderia ambifaria (strain MC40-6)).